The sequence spans 1407 residues: DNA-directed RNA polymerase subunit beta' (1407 aa).

The Zn(2+) site is built by C70, C72, C85, and C88. D460, D462, and D464 together coordinate Mg(2+). 4 residues coordinate Zn(2+): C814, C888, C895, and C898.

It belongs to the RNA polymerase beta' chain family. In terms of assembly, the RNAP catalytic core consists of 2 alpha, 1 beta, 1 beta' and 1 omega subunit. When a sigma factor is associated with the core the holoenzyme is formed, which can initiate transcription. Requires Mg(2+) as cofactor. Zn(2+) is required as a cofactor.

The enzyme catalyses RNA(n) + a ribonucleoside 5'-triphosphate = RNA(n+1) + diphosphate. In terms of biological role, DNA-dependent RNA polymerase catalyzes the transcription of DNA into RNA using the four ribonucleoside triphosphates as substrates. This is DNA-directed RNA polymerase subunit beta' from Cellvibrio japonicus (strain Ueda107) (Pseudomonas fluorescens subsp. cellulosa).